Consider the following 318-residue polypeptide: uncharacterized protein (318 aa).

The protein belongs to the NAD(P)-dependent epimerase/dehydratase family.

This is an uncharacterized protein from Staphylococcus epidermidis (strain ATCC 12228 / FDA PCI 1200).